The following is a 122-amino-acid chain: Large ribosomal subunit protein uL14c (122 aa).

Belongs to the universal ribosomal protein uL14 family. Part of the 50S ribosomal subunit.

Its subcellular location is the plastid. Its function is as follows. Binds to 23S rRNA. The polypeptide is Large ribosomal subunit protein uL14c (Cuscuta gronovii (Common dodder)).